Reading from the N-terminus, the 514-residue chain is ATP synthase subunit alpha (514 aa).

G170–T177 is an ATP binding site.

It belongs to the ATPase alpha/beta chains family. In terms of assembly, F-type ATPases have 2 components, CF(1) - the catalytic core - and CF(0) - the membrane proton channel. CF(1) has five subunits: alpha(3), beta(3), gamma(1), delta(1), epsilon(1). CF(0) has three main subunits: a(1), b(2) and c(9-12). The alpha and beta chains form an alternating ring which encloses part of the gamma chain. CF(1) is attached to CF(0) by a central stalk formed by the gamma and epsilon chains, while a peripheral stalk is formed by the delta and b chains.

It localises to the cell inner membrane. It catalyses the reaction ATP + H2O + 4 H(+)(in) = ADP + phosphate + 5 H(+)(out). Functionally, produces ATP from ADP in the presence of a proton gradient across the membrane. The alpha chain is a regulatory subunit. In Acidithiobacillus ferrooxidans (strain ATCC 23270 / DSM 14882 / CIP 104768 / NCIMB 8455) (Ferrobacillus ferrooxidans (strain ATCC 23270)), this protein is ATP synthase subunit alpha.